The following is a 301-amino-acid chain: Ubiquinone biosynthesis protein COQ4, mitochondrial (301 aa).

A mitochondrion-targeting transit peptide spans 1–46 (MEVTLKRSAALARQTTPLLRPLRPVATYPSNNNNNNNPTPQQRRPY). The disordered stretch occupies residues 14–48 (QTTPLLRPLRPVATYPSNNNNNNNPTPQQRRPYSL). Positions 38 to 48 (PTPQQRRPYSL) are enriched in polar residues. Histidine 185, aspartate 186, histidine 189, and glutamate 201 together coordinate Zn(2+).

Belongs to the COQ4 family. As to quaternary structure, component of a multi-subunit COQ enzyme complex, composed of at least COQ3, COQ4, COQ5, COQ6, COQ7 and COQ9. Requires Zn(2+) as cofactor.

Its subcellular location is the mitochondrion inner membrane. The catalysed reaction is a 4-hydroxy-3-methoxy-5-(all-trans-polyprenyl)benzoate + H(+) = a 2-methoxy-6-(all-trans-polyprenyl)phenol + CO2. It participates in cofactor biosynthesis; ubiquinone biosynthesis. In terms of biological role, lyase that catalyzes the C1-decarboxylation of 4-hydroxy-3-methoxy-5-(all-trans-polyprenyl)benzoic acid into 2-methoxy-6-(all-trans-polyprenyl)phenol during ubiquinone biosynthesis. This chain is Ubiquinone biosynthesis protein COQ4, mitochondrial, found in Podospora anserina (strain S / ATCC MYA-4624 / DSM 980 / FGSC 10383) (Pleurage anserina).